The chain runs to 717 residues: Ferric reduction oxidase 3, mitochondrial (717 aa).

The N-terminal 23 residues, 1–23 (MAARGRLVVARGNRSFSSIIRKY), are a transit peptide targeting the mitochondrion. 6 consecutive transmembrane segments (helical) span residues 40-59 (LLTM…MPTS), 86-104 (LLVY…SIYL), 140-163 (LGIV…WSLA), 232-255 (YHIW…CIYW), 306-330 (THYL…LISF), and 353-373 (LVSA…KNPM). The Ferric oxidoreductase domain maps to 198–317 (GLTGNICLGF…YLYMVFMLFF (120 aa)). Heme is bound by residues histidine 233, histidine 247, histidine 307, and histidine 320. Residues 346-451 (QSRNNVKLVS…EGPYGPASTD (106 aa)) form the FAD-binding FR-type domain. Residue 395–398 (HPFT) participates in FAD binding. 443 to 446 (GPYG) is an NAD(+) binding site. The next 2 helical transmembrane spans lie at 564 to 586 (WLWL…AIIS) and 606 to 627 (SLIY…AMLC).

It belongs to the ferric reductase (FRE) family. The cofactor is FAD. In terms of tissue distribution, expressed in root steele. Detected in shoots, leaves, stems, siliques, flowers and cotyledons.

The protein localises to the mitochondrion membrane. It carries out the reaction 2 a Fe(II)-siderophore + NAD(+) + H(+) = 2 a Fe(III)-siderophore + NADH. In terms of biological role, ferric chelate reductase involved in iron reduction in roots. May participate in the transport of electrons to a Fe(3+) ion via FAD and heme intermediates. This chain is Ferric reduction oxidase 3, mitochondrial (FRO3), found in Arabidopsis thaliana (Mouse-ear cress).